The primary structure comprises 161 residues: Beta-lactoglobulin-1 (161 aa).

Disulfide bonds link cysteine 66/cysteine 159 and cysteine 106/cysteine 119.

This sequence belongs to the calycin superfamily. Lipocalin family. As to quaternary structure, monomer. Synthesized in mammary gland and secreted in milk.

Its subcellular location is the secreted. In terms of biological role, primary component of whey, it binds retinol and is probably involved in the transport of that molecule. The polypeptide is Beta-lactoglobulin-1 (LGB1) (Canis lupus familiaris (Dog)).